The following is a 433-amino-acid chain: Glutamate-rich protein 2 (433 aa).

5 disordered regions span residues 56–86 (VPAA…LAPP), 113–161 (DSAS…KHPQ), 189–273 (SRQN…SIET), 308–344 (CLED…TRAP), and 394–433 (EKAQ…EDGS). Over residues 63 to 85 (PAPPPPRALRPAPGPPRSAPLAP) the composition is skewed to pro residues. Positions 114–127 (SASQARGSEPSSSA) are enriched in polar residues. 2 stretches are compositionally biased toward basic and acidic residues: residues 199–214 (DPKE…EKPQ) and 244–258 (ARKE…DKVS). Over residues 259–273 (LKSSENRPSSRSIET) the composition is skewed to polar residues. 2 stretches are compositionally biased toward acidic residues: residues 308–334 (CLED…EDDE) and 397–433 (QEEE…EDGS).

In Rattus norvegicus (Rat), this protein is Glutamate-rich protein 2 (Erich2).